A 432-amino-acid polypeptide reads, in one-letter code: Cyclic GMP-AMP synthase (432 aa).

110-115 (QGSFQY) provides a ligand contact to GTP. 2 residues coordinate Mg(2+): Asp-129 and Asp-131. Residue Arg-180 coordinates ATP. Asp-191 contributes to the Mg(2+) binding site. An ATP-binding site is contributed by Ser-255. GTP is bound by residues Lys-283, Ser-297, and Asp-344. Positions 413-432 (LNAPSKEPSSKPINKTMVSG) are disordered. Residues 423–432 (KPINKTMVSG) are compositionally biased toward polar residues.

It belongs to the CD-NTase family. A01 subfamily. The cofactor is Mg(2+).

The enzyme catalyses GTP + ATP = 3',3'-cGAMP + 2 diphosphate. Cyclic nucleotide synthase (second messenger synthase) of a CBASS antivirus system. CBASS (cyclic oligonucleotide-based antiphage signaling system) provides immunity against bacteriophage. The CD-NTase protein synthesizes cyclic nucleotides in response to infection; these serve as specific second messenger signals. The signals activate a diverse range of effectors, leading to bacterial cell death and thus abortive phage infection. A type II-C(GA) CBASS system. Functionally, catalyzes the synthesis of 3'3'-cyclic GMP-AMP (3'3'-cGAMP) from GTP and ATP, a second messenger in cell signal transduction. Is also able to produce c-di-AMP and c-di-GMP from ATP and GTP, respectively; however, 3'3'-cGAMP is the dominant molecule produced by DncV in vivo, contrary to the 2'3'-cGAMP produced by eukaryotes. By producing cGAMP, down-regulates csgD expression and expression of flagellum regulon genes, which leads to the down-regulation of rdar biofilm formation and flagellum-mediated swimming and swarming motility in a temperature-dependent manner. Controls the activity of cGAMP-activated phospholipase CapV, a patatin-like lipase that is a direct 3',3'-cGAMP receptor encoded in the dncV operon. The polypeptide is Cyclic GMP-AMP synthase (Escherichia coli).